The following is a 1091-amino-acid chain: Ninein homolog (1091 aa).

The tract at residues 1–361 (MEVSADPYEQ…AVEVDERHAS (361 aa)) is sufficient for binding to microtubules. Disordered regions lie at residues 100–216 (YIES…TTSP), 456–483 (AQTS…KEEE), 525–602 (KAKK…EELT), and 616–639 (KAAK…SLEQ). Phosphoserine occurs at positions 103, 107, 108, 113, and 141. Phosphothreonine is present on T144. Residues 168 to 177 (VQRSSSQSDL) are compositionally biased toward polar residues. The tract at residues 487–526 (LMEKLAALQMENAQLRDKTDELTIEIESLNVELIRSKTKA) is sufficient for interaction with ens. Composition is skewed to basic and acidic residues over residues 527-537 (KKQEKQEKQED) and 547-563 (RRGD…ESPR). The residue at position 594 (S594) is a Phosphoserine. The span at 616–634 (KAAKEGRSLTPESRSKELE) shows a compositional bias: basic and acidic residues. Phosphoserine occurs at positions 701 and 714. The disordered stretch occupies residues 799 to 919 (AKSLADSKDE…TSCLSHEKCS (121 aa)). Residues 822–845 (SHKTASRNNLTTSETSIFSTTPFE) show a composition bias toward polar residues. Residues 846-860 (SSQSGPSPTNSGNSN) are compositionally biased toward low complexity. Positions 894-913 (ETSSTASGKSFESNSKTSCL) are enriched in polar residues.

Interacts with ens.

Its subcellular location is the cytoplasm. It localises to the cytoskeleton. The protein localises to the microtubule organizing center. It is found in the centrosome. The protein resides in the perinuclear region. Functionally, required for the positioning and anchorage of the microtubule minus-ends in various cells. In fat body cells, part of perinuclear non-centrosomal microtubule-organizing centers (ncMTOCs) which function to accommodate the organization of microtubule (MT) networks to control nuclear positioning and dynein motor-based retrograde endosomal trafficking. Within the ncMTOCs, Msp300 and shot anchors the ncMTOC at the nuclear surface and recruits the MT minus-end regulators Patronin and Nin for assembly, anchoring and/or stabilization of circumferential and radial MTs at the ncMTOC. This protein may also function with Patronin to recruit msps to the ncMTOC for the gamma-tubulin-independent elongation of radial MTs. In embryonic myotubes and larval myofibers, functions with ens to regulate myonuclear positioning and, as a consequence, is involved in muscle development. Likely functions by positively regulating ens. Essential for embryogenesis, likely by contributing to accurate chromosome segregation during early embryonic nuclear divisions. However, other reports found that it is not essential for embryogenesis or embryonic cellular divisions. The chain is Ninein homolog from Drosophila melanogaster (Fruit fly).